Here is a 120-residue protein sequence, read N- to C-terminus: Glycine cleavage system H protein (120 aa).

The 83-residue stretch at 20-102 folds into the Lipoyl-binding domain; the sequence is DGTVGISDHA…YEGGWLFKLD (83 aa). K61 carries the post-translational modification N6-lipoyllysine.

This sequence belongs to the GcvH family. The glycine cleavage system is composed of four proteins: P, T, L and H. Requires (R)-lipoate as cofactor.

In terms of biological role, the glycine cleavage system catalyzes the degradation of glycine. The H protein shuttles the methylamine group of glycine from the P protein to the T protein. The polypeptide is Glycine cleavage system H protein (Deinococcus radiodurans (strain ATCC 13939 / DSM 20539 / JCM 16871 / CCUG 27074 / LMG 4051 / NBRC 15346 / NCIMB 9279 / VKM B-1422 / R1)).